Consider the following 179-residue polypeptide: Large ribosomal subunit protein uL5 (179 aa).

This sequence belongs to the universal ribosomal protein uL5 family. As to quaternary structure, part of the 50S ribosomal subunit; part of the 5S rRNA/L5/L18/L25 subcomplex. Contacts the 5S rRNA and the P site tRNA. Forms a bridge to the 30S subunit in the 70S ribosome.

Its function is as follows. This is one of the proteins that bind and probably mediate the attachment of the 5S RNA into the large ribosomal subunit, where it forms part of the central protuberance. In the 70S ribosome it contacts protein S13 of the 30S subunit (bridge B1b), connecting the 2 subunits; this bridge is implicated in subunit movement. Contacts the P site tRNA; the 5S rRNA and some of its associated proteins might help stabilize positioning of ribosome-bound tRNAs. This Acidovorax ebreus (strain TPSY) (Diaphorobacter sp. (strain TPSY)) protein is Large ribosomal subunit protein uL5.